The sequence spans 448 residues: Phosphoglucosamine mutase (448 aa).

Residue Ser-100 is the Phosphoserine intermediate of the active site. The Mg(2+) site is built by Ser-100, Asp-240, Asp-242, and Asp-244. A Phosphoserine modification is found at Ser-100.

This sequence belongs to the phosphohexose mutase family. Mg(2+) is required as a cofactor. In terms of processing, activated by phosphorylation.

It carries out the reaction alpha-D-glucosamine 1-phosphate = D-glucosamine 6-phosphate. Functionally, catalyzes the conversion of glucosamine-6-phosphate to glucosamine-1-phosphate. The chain is Phosphoglucosamine mutase from Alkaliphilus metalliredigens (strain QYMF).